The chain runs to 71 residues: Small ribosomal subunit protein bS21 (71 aa).

The tract at residues 47 to 71 is disordered; sequence RENATRAKRHAKRVARENARNTRLY. Positions 60–71 are enriched in basic and acidic residues; that stretch reads VARENARNTRLY.

It belongs to the bacterial ribosomal protein bS21 family.

The chain is Small ribosomal subunit protein bS21 from Actinobacillus succinogenes (strain ATCC 55618 / DSM 22257 / CCUG 43843 / 130Z).